The chain runs to 155 residues: Peptide methionine sulfoxide reductase MsrB (155 aa).

In terms of domain architecture, MsrB spans 15–137 (REALIATLNA…NSVSLTFIPT (123 aa)). Positions 54, 57, 103, and 106 each coordinate Zn(2+). Catalysis depends on C126, which acts as the Nucleophile.

It belongs to the MsrB Met sulfoxide reductase family. Zn(2+) is required as a cofactor.

The enzyme catalyses L-methionyl-[protein] + [thioredoxin]-disulfide + H2O = L-methionyl-(R)-S-oxide-[protein] + [thioredoxin]-dithiol. In Xylella fastidiosa (strain 9a5c), this protein is Peptide methionine sulfoxide reductase MsrB.